Reading from the N-terminus, the 66-residue chain is Large ribosomal subunit protein bL33c (66 aa).

Belongs to the bacterial ribosomal protein bL33 family.

The protein resides in the plastid. It is found in the chloroplast. The polypeptide is Large ribosomal subunit protein bL33c (Drimys granadensis).